A 639-amino-acid polypeptide reads, in one-letter code: ATP-dependent zinc metalloprotease FtsH (639 aa).

The Cytoplasmic portion of the chain corresponds to 1–15; the sequence is MDNEKQASPPPAAPP. Residues 16–36 traverse the membrane as a helical segment; that stretch reads LNWRYLLWIILLGIFLISWLG. Over 37-123 the chain is Periplasmic; it reads NAGRQAGDEI…VQAKSEEPSL (87 aa). Residues 124–144 traverse the membrane as a helical segment; it reads WMQAIIGILPWFLILGLIFYV. Topologically, residues 145 to 639 are cytoplasmic; the sequence is SYRMQQRMMG…HNEAVATGAG (495 aa). 221–228 lines the ATP pocket; it reads GRPGTGKT. Zn(2+) is bound at residue His442. Residue Glu443 is part of the active site. Positions 446 and 518 each coordinate Zn(2+).

In the central section; belongs to the AAA ATPase family. This sequence in the C-terminal section; belongs to the peptidase M41 family. In terms of assembly, homohexamer. Zn(2+) is required as a cofactor.

It is found in the cell inner membrane. Its function is as follows. Acts as a processive, ATP-dependent zinc metallopeptidase for both cytoplasmic and membrane proteins. Plays a role in the quality control of integral membrane proteins. This is ATP-dependent zinc metalloprotease FtsH from Nitrosococcus oceani (strain ATCC 19707 / BCRC 17464 / JCM 30415 / NCIMB 11848 / C-107).